A 1162-amino-acid polypeptide reads, in one-letter code: Eukaryotic translation initiation factor 2-alpha kinase (1162 aa).

Residues 1 to 39 (MQDDLDGIVRHRRRSLSFLQIVTLTMAGLVAFDPAQVLA) form the signal peptide. Over 40–537 (GHPTTDSELQ…DDIDAPVKVV (498 aa)) the chain is Lumenal. Asn-193, Asn-260, Asn-353, Asn-461, Asn-505, and Asn-516 each carry an N-linked (GlcNAc...) asparagine glycan. Positions 498 to 517 (TAPTSPTNATSEGTEATGNH) are disordered. Over residues 499 to 517 (APTSPTNATSEGTEATGNH) the composition is skewed to polar residues. Residues 538–558 (ILSLWFWWKEIVVIAFTSAVI) traverse the membrane as a helical segment. Residues 559 to 1162 (LNIFMGQRNQ…TFSSSSEPHQ (604 aa)) are Cytoplasmic-facing. Ser-624 is modified (phosphoserine). Residues 642–1130 (FELMQCLGRG…LRNILQLPHL (489 aa)) enclose the Protein kinase domain. ATP contacts are provided by residues 648-656 (LGRGGFGVV) and Lys-671. A Phosphoserine modification is found at Ser-797. Residues 801–839 (FRSESQSAALRAEEEDDTDDDYEEDEEQQGDHEKRHRSS) form a disordered region. The segment covering 813–828 (EEEDDTDDDYEEDEEQ) has biased composition (acidic residues). Thr-818 carries the post-translational modification Phosphothreonine. Asp-980 serves as the catalytic Proton acceptor. Thr-1028 is subject to Phosphothreonine. A disordered region spans residues 1135–1162 (QSEQAELAERARRLSRSRTFSSSSEPHQ). A compositionally biased stretch (low complexity) spans 1151–1162 (SRTFSSSSEPHQ).

This sequence belongs to the protein kinase superfamily. Ser/Thr protein kinase family. GCN2 subfamily. Forms dimers with HSPA5/BIP in resting cells. Oligomerizes in ER-stressed cells. In terms of processing, autophosphorylated. Post-translationally, N-glycosylated.

The protein localises to the endoplasmic reticulum membrane. It catalyses the reaction L-seryl-[protein] + ATP = O-phospho-L-seryl-[protein] + ADP + H(+). The enzyme catalyses L-threonyl-[protein] + ATP = O-phospho-L-threonyl-[protein] + ADP + H(+). Perturbation in protein folding in the endoplasmic reticulum (ER) promotes reversible dissociation from HSPA5/BIP and oligomerization, resulting in transautophosphorylation and kinase activity induction. In terms of biological role, phosphorylates the alpha subunit of eukaryotic translation-initiation factor 2 (EIF2), leading to its inactivation and thus to a rapid reduction of translational initiation and repression of global protein synthesis. In Drosophila melanogaster (Fruit fly), this protein is Eukaryotic translation initiation factor 2-alpha kinase (PEK).